The primary structure comprises 107 residues: Heme-degrading monooxygenase (107 aa).

One can recognise an ABM domain in the interval Ile-2–Tyr-94. Asn-6 contributes to the Fe cation binding site. Residue His-76 participates in heme binding.

It belongs to the antibiotic biosynthesis monooxygenase family. Heme-degrading monooxygenase IsdG subfamily. Homodimer.

It is found in the cytoplasm. The enzyme catalyses heme b + 3 reduced [NADPH--hemoprotein reductase] + 3 O2 = biliverdin IXalpha + CO + Fe(2+) + 3 oxidized [NADPH--hemoprotein reductase] + 3 H2O + H(+). Its function is as follows. Allows bacterial pathogens to use the host heme as an iron source. Catalyzes the oxidative degradation of the heme macrocyclic porphyrin ring to the biliverdin in the presence of a suitable electron donor such as ascorbate or NADPH--cytochrome P450 reductase, with subsequent release of free iron. The sequence is that of Heme-degrading monooxygenase from Bacillus mycoides (strain KBAB4) (Bacillus weihenstephanensis).